The primary structure comprises 118 residues: uncharacterized protein (118 aa).

3 helical membrane passes run 20–39, 46–63, and 67–85; these read VEGP…LLWI, LVVV…GEAV, and LSLV…AMSG. The disordered stretch occupies residues 85–118; sequence GDKSKKKGKKQRSILKDADDWDDDSWDDEGDWDE. Residues 88–97 are compositionally biased toward basic residues; that stretch reads SKKKGKKQRS. The segment covering 103–118 has biased composition (acidic residues); it reads DDWDDDSWDDEGDWDE.

The protein localises to the cell membrane. This is an uncharacterized protein from Archaeoglobus fulgidus (strain ATCC 49558 / DSM 4304 / JCM 9628 / NBRC 100126 / VC-16).